Consider the following 691-residue polypeptide: Elongation factor G (691 aa).

Residues S6 to I281 enclose the tr-type G domain. GTP is bound by residues A15 to T22, D79 to H83, and N133 to D136.

The protein belongs to the TRAFAC class translation factor GTPase superfamily. Classic translation factor GTPase family. EF-G/EF-2 subfamily.

It localises to the cytoplasm. Catalyzes the GTP-dependent ribosomal translocation step during translation elongation. During this step, the ribosome changes from the pre-translocational (PRE) to the post-translocational (POST) state as the newly formed A-site-bound peptidyl-tRNA and P-site-bound deacylated tRNA move to the P and E sites, respectively. Catalyzes the coordinated movement of the two tRNA molecules, the mRNA and conformational changes in the ribosome. This is Elongation factor G from Wolbachia pipientis wMel.